The chain runs to 23 residues: Brevinin-1Eb (23 aa).

Cysteines 17 and 23 form a disulfide.

It belongs to the frog skin active peptide (FSAP) family. Brevinin subfamily. As to expression, expressed by the skin glands.

Its subcellular location is the secreted. Its function is as follows. Shows antibacterial activity against representative Gram-negative and Gram-positive bacterial species, and a very high hemolytic activity. The protein is Brevinin-1Eb of Pelophylax lessonae (Pool frog).